A 408-amino-acid polypeptide reads, in one-letter code: Imidazolonepropionase (408 aa).

Residues His73 and His75 each contribute to the Fe(3+) site. Zn(2+) contacts are provided by His73 and His75. Residues Arg82, Tyr145, and His178 each coordinate 4-imidazolone-5-propanoate. Position 145 (Tyr145) interacts with N-formimidoyl-L-glutamate. His243 contributes to the Fe(3+) binding site. His243 contributes to the Zn(2+) binding site. Position 246 (Gln246) interacts with 4-imidazolone-5-propanoate. Asp318 contributes to the Fe(3+) binding site. Asp318 contacts Zn(2+). The N-formimidoyl-L-glutamate site is built by Asn320 and Gly322. Ser323 is a binding site for 4-imidazolone-5-propanoate.

It belongs to the metallo-dependent hydrolases superfamily. HutI family. Requires Zn(2+) as cofactor. Fe(3+) is required as a cofactor.

It is found in the cytoplasm. It catalyses the reaction 4-imidazolone-5-propanoate + H2O = N-formimidoyl-L-glutamate. It functions in the pathway amino-acid degradation; L-histidine degradation into L-glutamate; N-formimidoyl-L-glutamate from L-histidine: step 3/3. Functionally, catalyzes the hydrolytic cleavage of the carbon-nitrogen bond in imidazolone-5-propanoate to yield N-formimidoyl-L-glutamate. It is the third step in the universal histidine degradation pathway. The polypeptide is Imidazolonepropionase (Shewanella baltica (strain OS155 / ATCC BAA-1091)).